The sequence spans 101 residues: EAPCGDTSGFEQVRLADLPPEATDTYELIEKGGPYPYPEDGTVFENREGILPDCAEGYYHEYTVKTPSGDDRGARRFVVGDGGEYFYTEDHYESFRLTIVN.

A disulfide bridge links cysteine 4 with cysteine 54. The active-site Proton acceptor is the glutamate 61. Histidine 91 serves as the catalytic Proton donor.

This sequence belongs to the ribonuclease N1/T1 family.

It carries out the reaction [RNA] containing guanosine + H2O = an [RNA fragment]-3'-guanosine-3'-phosphate + a 5'-hydroxy-ribonucleotide-3'-[RNA fragment].. The chain is Guanyl-specific ribonuclease St from Saccharopolyspora erythraea (Streptomyces erythraeus).